The primary structure comprises 117 residues: Large ribosomal subunit protein bL20 (117 aa).

The protein belongs to the bacterial ribosomal protein bL20 family.

In terms of biological role, binds directly to 23S ribosomal RNA and is necessary for the in vitro assembly process of the 50S ribosomal subunit. It is not involved in the protein synthesizing functions of that subunit. The polypeptide is Large ribosomal subunit protein bL20 (Aliivibrio fischeri (strain ATCC 700601 / ES114) (Vibrio fischeri)).